Consider the following 175-residue polypeptide: Adenine phosphoribosyltransferase (175 aa).

This sequence belongs to the purine/pyrimidine phosphoribosyltransferase family. In terms of assembly, homodimer.

It is found in the cytoplasm. It carries out the reaction AMP + diphosphate = 5-phospho-alpha-D-ribose 1-diphosphate + adenine. It participates in purine metabolism; AMP biosynthesis via salvage pathway; AMP from adenine: step 1/1. Catalyzes a salvage reaction resulting in the formation of AMP, that is energically less costly than de novo synthesis. The protein is Adenine phosphoribosyltransferase of Thermosipho melanesiensis (strain DSM 12029 / CIP 104789 / BI429).